Reading from the N-terminus, the 129-residue chain is Small ribosomal subunit protein uS8 (129 aa).

It belongs to the universal ribosomal protein uS8 family. In terms of assembly, part of the 30S ribosomal subunit. Contacts proteins S5 and S12.

In terms of biological role, one of the primary rRNA binding proteins, it binds directly to 16S rRNA central domain where it helps coordinate assembly of the platform of the 30S subunit. In Mesoplasma florum (strain ATCC 33453 / NBRC 100688 / NCTC 11704 / L1) (Acholeplasma florum), this protein is Small ribosomal subunit protein uS8.